Here is a 450-residue protein sequence, read N- to C-terminus: Glucose-6-phosphate isomerase (450 aa).

Glu290 (proton donor) is an active-site residue. Catalysis depends on residues His311 and Lys425.

This sequence belongs to the GPI family.

The protein resides in the cytoplasm. The enzyme catalyses alpha-D-glucose 6-phosphate = beta-D-fructose 6-phosphate. Its pathway is carbohydrate biosynthesis; gluconeogenesis. It functions in the pathway carbohydrate degradation; glycolysis; D-glyceraldehyde 3-phosphate and glycerone phosphate from D-glucose: step 2/4. Its function is as follows. Catalyzes the reversible isomerization of glucose-6-phosphate to fructose-6-phosphate. This is Glucose-6-phosphate isomerase from Listeria innocua serovar 6a (strain ATCC BAA-680 / CLIP 11262).